A 240-amino-acid polypeptide reads, in one-letter code: Probable transcriptional regulatory protein Nmul_A2722 (240 aa).

Belongs to the TACO1 family.

The protein localises to the cytoplasm. This chain is Probable transcriptional regulatory protein Nmul_A2722, found in Nitrosospira multiformis (strain ATCC 25196 / NCIMB 11849 / C 71).